Consider the following 443-residue polypeptide: sn-2 acyl-lipid omega-3 desaturase (ferredoxin), chloroplastic (443 aa).

The transit peptide at Met-1–Arg-51 directs the protein to the chloroplast. 2 helical membrane passes run Met-120–Leu-140 and Trp-143–Leu-163. Positions His-165 to His-169 match the Histidine box-1 motif. The Histidine box-2 motif lies at His-201–His-205. 2 consecutive transmembrane segments (helical) span residues Thr-281–Val-301 and Leu-304–Leu-324. The short motif at His-368–His-372 is the Histidine box-3 element.

It belongs to the fatty acid desaturase type 1 family. As to expression, highly expressed in leaves and cotyledons, while no or little expression detected in mature seeds, roots and stems.

The protein localises to the plastid. It is found in the chloroplast membrane. It catalyses the reaction a (7Z,10Z)-hexadecadienoyl-containing glycerolipid + 2 reduced [2Fe-2S]-[ferredoxin] + O2 + 2 H(+) = a (7Z,10Z,13Z)-hexadecatrienoyl-containing glycerolipid + 2 oxidized [2Fe-2S]-[ferredoxin] + 2 H2O. The catalysed reaction is a (9Z,12Z)-octadecadienoyl-containing glycerolipid + 2 reduced [2Fe-2S]-[ferredoxin] + O2 + 2 H(+) = (9Z,12Z,15Z)-octadecatrienoyl-containing glycerolipid + 2 oxidized [2Fe-2S]-[ferredoxin] + 2 H2O. It functions in the pathway lipid metabolism; polyunsaturated fatty acid biosynthesis. Functionally, chloroplast omega-3 fatty acid desaturase introduces the third double bond in the biosynthesis of 18:3, and probably also 16:3 fatty acids, important constituents of plant membranes. It is thought to use ferredoxin as an electron donor and to act on fatty acids esterified to galactolipids, sulfolipids and phosphatidylglycerol. In Helianthus annuus (Common sunflower), this protein is sn-2 acyl-lipid omega-3 desaturase (ferredoxin), chloroplastic.